Here is a 63-residue protein sequence, read N- to C-terminus: MSDTQTRDVDPKLLEILVCPVTRETLRYDREAHELISEGAGLAYPVRDGIPIMLPDEARQLDD.

This sequence belongs to the UPF0434 family.

The chain is UPF0434 protein Mmar10_2939 from Maricaulis maris (strain MCS10) (Caulobacter maris).